The following is a 323-amino-acid chain: Down-regulator of invasive growth 2 (323 aa).

Acidic residues predominate over residues 1-10 (MNKEEQEDPQ). Positions 1 to 26 (MNKEEQEDPQQEQISTVQENDPRNLQ) are disordered. Positions 11-26 (QEQISTVQENDPRNLQ) are enriched in polar residues. Serine 34 bears the Phosphoserine mark. Residues 67-87 (LSQKEEDHSGKPPTITTSPAE) are disordered. 3 positions are modified to phosphoserine: serine 225, serine 266, and serine 270.

In terms of assembly, forms a complex with DIG1, STE12 and either FUS3 or KSS1. The interaction of FUS3 with STE12 depends on the presence of both DIG1 and DIG2. STE12 is lost from FUS3/DIG1/DIG2 complex after pheromone treatment. DIG1 and DIG2 have also been reported to interact with CLN1 and CLN2. Post-translationally, phosphorylated by FUS3 and KSS1, in a pheromone-stimulated manner.

It localises to the nucleus. Its function is as follows. DIG2 and DIG1 are negative regulators of the filamentation and pheromone induced mating program. DIG1 and DIG2 inhibit the transcriptional activity of STE12 by direct protein-protein interaction. DIG2 binds to the DNA binding domain (DBD) of STE12 and thus inhibits transcription when overexpressed. This chain is Down-regulator of invasive growth 2 (DIG2), found in Saccharomyces cerevisiae (strain ATCC 204508 / S288c) (Baker's yeast).